A 445-amino-acid polypeptide reads, in one-letter code: UDP-N-acetylmuramoylalanine--D-glutamate ligase (445 aa).

Residue 117–123 (GSNGKTT) coordinates ATP.

It belongs to the MurCDEF family.

The protein resides in the cytoplasm. It catalyses the reaction UDP-N-acetyl-alpha-D-muramoyl-L-alanine + D-glutamate + ATP = UDP-N-acetyl-alpha-D-muramoyl-L-alanyl-D-glutamate + ADP + phosphate + H(+). It functions in the pathway cell wall biogenesis; peptidoglycan biosynthesis. Its function is as follows. Cell wall formation. Catalyzes the addition of glutamate to the nucleotide precursor UDP-N-acetylmuramoyl-L-alanine (UMA). This is UDP-N-acetylmuramoylalanine--D-glutamate ligase from Neisseria meningitidis serogroup B (strain ATCC BAA-335 / MC58).